The chain runs to 746 residues: Stromal interaction molecule 2 (746 aa).

Residues 1–14 form the signal peptide; the sequence is MLLFGLLVAGVADG. Over 15–218 the chain is Extracellular; the sequence is CDLVPRHLRG…RPPHNWMKDF (204 aa). Position 28 is a phosphoserine (S28). The EF-hand domain occupies 67-102; the sequence is FSLEALQTIHKQMDDDKDGGIEVDESDEFIREDMKY. Residues D80, D82, D84, and E91 each contribute to the Ca(2+) site. The N-linked (GlcNAc...) asparagine glycan is linked to N135. The region spanning 136–204 is the SAM domain; that stretch reads WTLEDTLQWL…QLKALDVVLF (69 aa). A helical membrane pass occupies residues 219–235; it reads ILTISIVIGVGGCWFAY. Over 236–746 the chain is Cytoplasmic; that stretch reads TQNKTSKEHV…IKSLFKKKSK (511 aa). The stretch at 247–394 forms a coiled coil; sequence KMMKDLESLQ…EKIKKKRSTV (148 aa). 2 disordered regions span residues 490–562 and 592–651; these read PIVP…PDIL and DTAS…RGSP. At S523 the chain carries Phosphoserine. Over residues 527 to 539 the composition is skewed to low complexity; it reads QRAQLPAHAPLAA. Positions 540-549 are enriched in basic residues; the sequence is HPRHPHHPQH. Residues S609 and S621 each carry the phosphoserine modification. Over residues 625-637 the composition is skewed to basic and acidic residues; that stretch reads ISRDELSLEDSSR. S640, S650, S661, S665, S680, and S697 each carry phosphoserine. A disordered region spans residues 684–746; sequence LSSGIPVPHP…IKSLFKKKSK (63 aa). The span at 723–732 shows a compositional bias: basic and acidic residues; sequence DLCHNGEKSK. Residues 733–746 show a composition bias toward basic residues; that stretch reads KPSKIKSLFKKKSK.

In terms of assembly, oligomer with STIM1. Interacts with ORAI1. Post-translationally, glycosylated. In terms of processing, phosphorylated predominantly on Ser residues.

It is found in the endoplasmic reticulum membrane. Its function is as follows. Plays a role in mediating store-operated Ca(2+) entry (SOCE), a Ca(2+) influx following depletion of intracellular Ca(2+) stores. Functions as a highly sensitive Ca(2+) sensor in the endoplasmic reticulum which activates both store-operated and store-independent Ca(2+)-influx. Regulates basal cytosolic and endoplasmic reticulum Ca(2+) concentrations. Upon mild variations of the endoplasmic reticulum Ca(2+) concentration, translocates from the endoplasmic reticulum to the plasma membrane where it probably activates the Ca(2+) release-activated Ca(2+) (CRAC) channels ORAI1, ORAI2 and ORAI3. May inhibit STIM1-mediated Ca(2+) influx. The sequence is that of Stromal interaction molecule 2 (Stim2) from Mus musculus (Mouse).